A 341-amino-acid chain; its full sequence is Cobalt-precorrin-5B C(1)-methyltransferase (341 aa).

This sequence belongs to the CbiD family.

It catalyses the reaction Co-precorrin-5B + S-adenosyl-L-methionine = Co-precorrin-6A + S-adenosyl-L-homocysteine. It participates in cofactor biosynthesis; adenosylcobalamin biosynthesis; cob(II)yrinate a,c-diamide from sirohydrochlorin (anaerobic route): step 6/10. Functionally, catalyzes the methylation of C-1 in cobalt-precorrin-5B to form cobalt-precorrin-6A. This Picrophilus torridus (strain ATCC 700027 / DSM 9790 / JCM 10055 / NBRC 100828 / KAW 2/3) protein is Cobalt-precorrin-5B C(1)-methyltransferase.